The following is a 258-amino-acid chain: Phosphate import ATP-binding protein PstB (258 aa).

Residues 13 to 253 (ITVENLNLWY…PREKSTEDYI (241 aa)) enclose the ABC transporter domain. Position 45 to 52 (45 to 52 (GPSGCGKS)) interacts with ATP.

It belongs to the ABC transporter superfamily. Phosphate importer (TC 3.A.1.7) family. In terms of assembly, the complex is composed of two ATP-binding proteins (PstB), two transmembrane proteins (PstC and PstA) and a solute-binding protein (PstS).

The protein resides in the cell membrane. The catalysed reaction is phosphate(out) + ATP + H2O = ADP + 2 phosphate(in) + H(+). Functionally, part of the ABC transporter complex PstSACB involved in phosphate import. Responsible for energy coupling to the transport system. In Methanosarcina mazei (strain ATCC BAA-159 / DSM 3647 / Goe1 / Go1 / JCM 11833 / OCM 88) (Methanosarcina frisia), this protein is Phosphate import ATP-binding protein PstB.